The sequence spans 465 residues: GTPase Der (465 aa).

EngA-type G domains follow at residues 3-167 (PLVA…PEEG) and 179-352 (VRIA…ASAT). GTP contacts are provided by residues 9 to 16 (GRPNVGKS), 57 to 61 (DTGGI), 119 to 122 (NKID), 185 to 192 (GRPNVGKS), 232 to 236 (DTAGL), and 297 to 300 (NKWD). The 85-residue stretch at 353-437 (HEFSTSEVNQ…PVCFIFREGA (85 aa)) folds into the KH-like domain.

Belongs to the TRAFAC class TrmE-Era-EngA-EngB-Septin-like GTPase superfamily. EngA (Der) GTPase family. As to quaternary structure, associates with the 50S ribosomal subunit.

Its function is as follows. GTPase that plays an essential role in the late steps of ribosome biogenesis. This Xanthomonas oryzae pv. oryzae (strain MAFF 311018) protein is GTPase Der.